A 181-amino-acid chain; its full sequence is NADH-quinone oxidoreductase subunit I (181 aa).

4Fe-4S ferredoxin-type domains are found at residues 51–80 (TRNS…LKKS) and 90–119 (KSFQ…LTPD). [4Fe-4S] cluster is bound by residues cysteine 60, cysteine 63, cysteine 66, cysteine 70, cysteine 99, cysteine 102, cysteine 105, and cysteine 109.

The protein belongs to the complex I 23 kDa subunit family. NDH-1 is composed of 13 different subunits. Subunits NuoA, H, J, K, L, M, N constitute the membrane sector of the complex. [4Fe-4S] cluster is required as a cofactor.

The protein resides in the cell membrane. The catalysed reaction is a quinone + NADH + 5 H(+)(in) = a quinol + NAD(+) + 4 H(+)(out). Its function is as follows. NDH-1 shuttles electrons from NADH, via FMN and iron-sulfur (Fe-S) centers, to quinones in the respiratory chain. The immediate electron acceptor for the enzyme in this species is believed to be ubiquinone. Couples the redox reaction to proton translocation (for every two electrons transferred, four hydrogen ions are translocated across the cytoplasmic membrane), and thus conserves the redox energy in a proton gradient. In Buchnera aphidicola subsp. Cinara cedri (strain Cc), this protein is NADH-quinone oxidoreductase subunit I.